The chain runs to 280 residues: Probable N-acetyltransferase 14 (280 aa).

Transmembrane regions (helical) follow at residues 37-57 (LILH…LSSI) and 60-80 (CVLH…VIYL). The tract at residues 111–152 (PDLPNPHLGRAKLTTNQEKTRRRKKAKEKEKMNESEQVDEDE) is disordered. Residues 116–273 (PHLGRAKLTT…EKGWLGYPLT (158 aa)) enclose the N-acetyltransferase domain.

This sequence belongs to the camello family.

The protein resides in the membrane. In terms of biological role, probable acetyltransferase. This Danio rerio (Zebrafish) protein is Probable N-acetyltransferase 14 (nat14).